The following is a 408-amino-acid chain: Imidazolonepropionase (408 aa).

2 residues coordinate Fe(3+): His-73 and His-75. Zn(2+)-binding residues include His-73 and His-75. Positions 82, 145, and 178 each coordinate 4-imidazolone-5-propanoate. Tyr-145 contributes to the N-formimidoyl-L-glutamate binding site. His-243 contacts Fe(3+). A Zn(2+)-binding site is contributed by His-243. Gln-246 is a 4-imidazolone-5-propanoate binding site. Asp-318 lines the Fe(3+) pocket. A Zn(2+)-binding site is contributed by Asp-318. Residues Asn-320 and Gly-322 each coordinate N-formimidoyl-L-glutamate. Residue Ser-323 coordinates 4-imidazolone-5-propanoate.

This sequence belongs to the metallo-dependent hydrolases superfamily. HutI family. It depends on Zn(2+) as a cofactor. Requires Fe(3+) as cofactor.

The protein localises to the cytoplasm. The enzyme catalyses 4-imidazolone-5-propanoate + H2O = N-formimidoyl-L-glutamate. The protein operates within amino-acid degradation; L-histidine degradation into L-glutamate; N-formimidoyl-L-glutamate from L-histidine: step 3/3. Functionally, catalyzes the hydrolytic cleavage of the carbon-nitrogen bond in imidazolone-5-propanoate to yield N-formimidoyl-L-glutamate. It is the third step in the universal histidine degradation pathway. The sequence is that of Imidazolonepropionase from Shewanella halifaxensis (strain HAW-EB4).